A 450-amino-acid polypeptide reads, in one-letter code: Phosphoglucosamine mutase 2 (450 aa).

Residue Ser101 is the Phosphoserine intermediate of the active site. Ser101, Asp245, Asp247, and Asp249 together coordinate Mg(2+). Ser101 carries the phosphoserine modification.

It belongs to the phosphohexose mutase family. It depends on Mg(2+) as a cofactor. Activated by phosphorylation.

The enzyme catalyses alpha-D-glucosamine 1-phosphate = D-glucosamine 6-phosphate. Catalyzes the conversion of glucosamine-6-phosphate to glucosamine-1-phosphate. This Shewanella baltica (strain OS185) protein is Phosphoglucosamine mutase 2.